Here is a 389-residue protein sequence, read N- to C-terminus: S-adenosylmethionine synthase (389 aa).

ATP is bound at residue histidine 15. Aspartate 17 lines the Mg(2+) pocket. Glutamate 43 is a K(+) binding site. Glutamate 56 and glutamine 99 together coordinate L-methionine. The interval 99 to 109 is flexible loop; the sequence is QSPDIAQGVNE. Residues 166-168, 234-235, aspartate 243, 249-250, alanine 266, and lysine 270 contribute to the ATP site; these read DAK, RF, and RK. Residue aspartate 243 participates in L-methionine binding. Lysine 274 serves as a coordination point for L-methionine.

It belongs to the AdoMet synthase family. In terms of assembly, homotetramer; dimer of dimers. Requires Mg(2+) as cofactor. K(+) serves as cofactor.

The protein resides in the cytoplasm. The catalysed reaction is L-methionine + ATP + H2O = S-adenosyl-L-methionine + phosphate + diphosphate. Its pathway is amino-acid biosynthesis; S-adenosyl-L-methionine biosynthesis; S-adenosyl-L-methionine from L-methionine: step 1/1. In terms of biological role, catalyzes the formation of S-adenosylmethionine (AdoMet) from methionine and ATP. The overall synthetic reaction is composed of two sequential steps, AdoMet formation and the subsequent tripolyphosphate hydrolysis which occurs prior to release of AdoMet from the enzyme. The sequence is that of S-adenosylmethionine synthase from Neisseria meningitidis serogroup B (strain ATCC BAA-335 / MC58).